A 232-amino-acid polypeptide reads, in one-letter code: Large ribosomal subunit protein uL1 (232 aa).

This sequence belongs to the universal ribosomal protein uL1 family. Part of the 50S ribosomal subunit.

Its function is as follows. Binds directly to 23S rRNA. The L1 stalk is quite mobile in the ribosome, and is involved in E site tRNA release. Functionally, protein L1 is also a translational repressor protein, it controls the translation of the L11 operon by binding to its mRNA. This is Large ribosomal subunit protein uL1 from Liberibacter asiaticus (Citrus greening disease).